A 774-amino-acid polypeptide reads, in one-letter code: Protein translocase subunit SecA (774 aa).

ATP contacts are provided by residues Q66, 84–88, and D474; that span reads GEGKS.

Belongs to the SecA family.

The protein localises to the plastid. It localises to the chloroplast stroma. The protein resides in the chloroplast thylakoid membrane. It carries out the reaction ATP + H2O + cellular proteinSide 1 = ADP + phosphate + cellular proteinSide 2.. Has a central role in coupling the hydrolysis of ATP to the transfer of proteins across the thylakoid membrane. This is Protein translocase subunit SecA from Cyanidioschyzon merolae (strain NIES-3377 / 10D) (Unicellular red alga).